The sequence spans 134 residues: Large ribosomal subunit protein uL16c (134 aa).

Belongs to the universal ribosomal protein uL16 family. Part of the 50S ribosomal subunit.

It localises to the plastid. Its subcellular location is the chloroplast. The sequence is that of Large ribosomal subunit protein uL16c from Atropa belladonna (Belladonna).